The following is a 753-amino-acid chain: Neuroendocrine convertase 1 (753 aa).

The N-terminal stretch at 1–27 is a signal peptide; the sequence is MEQRGWTLQCTAFAFFCVWCALNSVKA. The propeptide occupies 28 to 110; it reads KRQFVNEWAA…QQYEKERSKR (83 aa). One can recognise a Peptidase S8 domain in the interval 129–450; the sequence is QWYLQDTRMT…FGLLNAKALV (322 aa). Residues aspartate 167 and histidine 208 each act as charge relay system in the active site. 2 disulfides stabilise this stretch: cysteine 225-cysteine 374 and cysteine 317-cysteine 347. Serine 382 acts as the Charge relay system in catalysis. N-linked (GlcNAc...) asparagine glycosylation occurs at asparagine 401. A P/Homo B domain is found at 460–597; sequence NVPEKKECVV…KLILHGTSSQ (138 aa). Cysteine 467 and cysteine 494 are disulfide-bonded. Residues 633 to 651 show a composition bias toward polar residues; that stretch reads QKSLNGNLLVPKNSSSSNV. The segment at 633 to 663 is disordered; that stretch reads QKSLNGNLLVPKNSSSSNVEGRRDEQVQGTP. Asparagine 645 carries an N-linked (GlcNAc...) asparagine glycan.

The protein belongs to the peptidase S8 family. Furin subfamily. Ca(2+) is required as a cofactor.

Its subcellular location is the cytoplasmic vesicle. It localises to the secretory vesicle. It catalyses the reaction Release of protein hormones, neuropeptides and renin from their precursors, generally by hydrolysis of -Lys-Arg-|- bonds.. Functionally, involved in the processing of hormone and other protein precursors at sites comprised of pairs of basic amino acid residues. Substrates include POMC, renin, enkephalin, dynorphin, somatostatin, insulin and AGRP. The polypeptide is Neuroendocrine convertase 1 (Pcsk1) (Mus musculus (Mouse)).